The primary structure comprises 1404 residues: DNA-directed RNA polymerase subunit beta' (1404 aa).

Zn(2+) is bound by residues cysteine 70, cysteine 72, cysteine 85, and cysteine 88. Mg(2+) is bound by residues aspartate 460, aspartate 462, and aspartate 464. Zn(2+) is bound by residues cysteine 814, cysteine 889, cysteine 896, and cysteine 899. Positions 1377 to 1404 (DSEMETLSGKPAAAEPVAAVADAGADEE) are disordered. Positions 1387–1404 (PAAAEPVAAVADAGADEE) are enriched in low complexity.

Belongs to the RNA polymerase beta' chain family. The RNAP catalytic core consists of 2 alpha, 1 beta, 1 beta' and 1 omega subunit. When a sigma factor is associated with the core the holoenzyme is formed, which can initiate transcription. Mg(2+) serves as cofactor. Zn(2+) is required as a cofactor.

It carries out the reaction RNA(n) + a ribonucleoside 5'-triphosphate = RNA(n+1) + diphosphate. Functionally, DNA-dependent RNA polymerase catalyzes the transcription of DNA into RNA using the four ribonucleoside triphosphates as substrates. The chain is DNA-directed RNA polymerase subunit beta' from Xanthomonas euvesicatoria pv. vesicatoria (strain 85-10) (Xanthomonas campestris pv. vesicatoria).